A 49-amino-acid polypeptide reads, in one-letter code: U3-plectoxin-Pt1a (49 aa).

5 disulfide bridges follow: Cys2–Cys16, Cys9–Cys30, Cys15–Cys41, Cys32–Cys39, and Cys45–Cys49.

Expressed by the venom gland.

Its subcellular location is the secreted. In terms of biological role, potent toxin that may paralyze and/or kill insect pests such as H.virescens (lepidoptera), S.exigua (beet armyworm) and M.sexta (tobacco hornworm). The chain is U3-plectoxin-Pt1a from Plectreurys tristis (Spider).